The chain runs to 1238 residues: Erythroid differentiation-related factor 1 (1238 aa).

Disordered regions lie at residues 1-38 (MGDAKEAGAEGPPAGAAARGGLSLLSQGESEESSAQGS), 220-268 (QPVS…GSEP), 517-561 (PKKE…SDDS), and 620-647 (KKESDLPAADPSTPIPLKYEDESSRGGP). 3 stretches are compositionally biased toward low complexity: residues 9-38 (AEGPPAGAAARGGLSLLSQGESEESSAQGS), 223-241 (SSTAEQQESSSSDQTNDSE), and 253-263 (SSVSEDPSASS). Residues 530–547 (NSDESYSEEEEEMPDSDE) are compositionally biased toward acidic residues. TPR repeat units lie at residues 693-726 (SKAYYVLSDAAMSLQKYGRALRYIKLALQSHDTY) and 914-953 (AQAHCGAGDELKREFSPEEGLYYNKAIDYYLKALRSLGTR).

Its subcellular location is the nucleus. Functionally, transcription factor involved in erythroid differentiation. Involved in transcriptional activation of the globin gene. This Homo sapiens (Human) protein is Erythroid differentiation-related factor 1 (EDRF1).